Reading from the N-terminus, the 512-residue chain is Cytochrome P450 monooxygenase TwmD (512 aa).

Cys-454 provides a ligand contact to heme.

The protein belongs to the cytochrome P450 family. It depends on heme as a cofactor.

It functions in the pathway secondary metabolite biosynthesis. Its function is as follows. Cytochrome P450 monooxygenase; part of the gene cluster that mediates the biosynthesis of wortmanamides A and B, reduced long-chain polyketides amidated with a specific omega-amino acid, 5-aminopentanoic acid (5PA). The PKS modules of TwmB are involved in the synthesis of the polyketide backbone, whereas the non-canonical C domain of TwmB is a bonafide condensation domain that specifically selects 5PA and catalyzes amidation to release polyketide chain. The C domain clearly prefers C16 and C18 fatty acyl substrates, which is consistent with simultaneous formation of both octaketide and nonaketide acyl amides wortmanamides A and B. Because TwmB lacks a designated enoylreductase (ER) domain, the required activity is provided the enoyl reductase TwmE. The roles of the remaining enzymes have still to be clarified. The sequence is that of Cytochrome P450 monooxygenase TwmD from Talaromyces wortmannii (Penicillium wortmannii).